The following is a 642-amino-acid chain: Threonine--tRNA ligase (642 aa).

The TGS domain maps to 1-61; it reads MPVVTLPDGS…DSDANLAIIT (61 aa). Positions 243–534 are catalytic; sequence DHRKIGKQLD…LTEEYAGFFP (292 aa). Residues Cys334, His385, and His511 each coordinate Zn(2+).

This sequence belongs to the class-II aminoacyl-tRNA synthetase family. As to quaternary structure, homodimer. It depends on Zn(2+) as a cofactor.

The protein resides in the cytoplasm. The catalysed reaction is tRNA(Thr) + L-threonine + ATP = L-threonyl-tRNA(Thr) + AMP + diphosphate + H(+). Its function is as follows. Catalyzes the attachment of threonine to tRNA(Thr) in a two-step reaction: L-threonine is first activated by ATP to form Thr-AMP and then transferred to the acceptor end of tRNA(Thr). Also edits incorrectly charged L-seryl-tRNA(Thr). In Photorhabdus laumondii subsp. laumondii (strain DSM 15139 / CIP 105565 / TT01) (Photorhabdus luminescens subsp. laumondii), this protein is Threonine--tRNA ligase.